Here is a 957-residue protein sequence, read N- to C-terminus: Glycine dehydrogenase (decarboxylating) (957 aa).

Lysine 708 carries the N6-(pyridoxal phosphate)lysine modification.

Belongs to the GcvP family. The glycine cleavage system is composed of four proteins: P, T, L and H. Pyridoxal 5'-phosphate is required as a cofactor.

The catalysed reaction is N(6)-[(R)-lipoyl]-L-lysyl-[glycine-cleavage complex H protein] + glycine + H(+) = N(6)-[(R)-S(8)-aminomethyldihydrolipoyl]-L-lysyl-[glycine-cleavage complex H protein] + CO2. Its function is as follows. The glycine cleavage system catalyzes the degradation of glycine. The P protein binds the alpha-amino group of glycine through its pyridoxal phosphate cofactor; CO(2) is released and the remaining methylamine moiety is then transferred to the lipoamide cofactor of the H protein. In Salmonella newport (strain SL254), this protein is Glycine dehydrogenase (decarboxylating).